A 135-amino-acid polypeptide reads, in one-letter code: Large ribosomal subunit protein bL17 (135 aa).

The protein belongs to the bacterial ribosomal protein bL17 family. As to quaternary structure, part of the 50S ribosomal subunit. Contacts protein L32.

In Listeria innocua serovar 6a (strain ATCC BAA-680 / CLIP 11262), this protein is Large ribosomal subunit protein bL17.